A 492-amino-acid polypeptide reads, in one-letter code: Adenosylhomocysteinase (492 aa).

Substrate-binding residues include T68, D153, and E215. An NAD(+)-binding site is contributed by 216 to 218 (TTT). The substrate site is built by K245 and D249. NAD(+) is bound by residues N250, 279–284 (GYGDVG), E302, N337, 358–360 (IGH), and N406.

The protein belongs to the adenosylhomocysteinase family. Requires NAD(+) as cofactor.

It localises to the cytoplasm. It catalyses the reaction S-adenosyl-L-homocysteine + H2O = L-homocysteine + adenosine. Its pathway is amino-acid biosynthesis; L-homocysteine biosynthesis; L-homocysteine from S-adenosyl-L-homocysteine: step 1/1. Its function is as follows. May play a key role in the regulation of the intracellular concentration of adenosylhomocysteine. In Mycobacterium ulcerans (strain Agy99), this protein is Adenosylhomocysteinase.